Consider the following 353-residue polypeptide: MSLTYDPSETIYPFPQKPVPLSEQEKLTHVEKIKALLKEKDAVLVAHYYTDPEIQALAEETGGFVGDSLEMARFGNQHSAKTLIICGVRFMGESAKILTPEKNVLMPTLEAECSLDLGCPADKFSEFCDAHPDHTVVVYANTSAAVKARADWVVTSSIALEIVEHLDSEGKDIIWGPDRHLGAYIQKNTGAEMLLWQGECVVHDEFSAKALRDMKALYPDAAVLVHPESPASVVALADAVGSTSQLIKAAKELPNTKLIVATDKGIFFKMQQMVPDKELVEAPTAGAGATCRSCAHCPWMAMNGLKAIESALVEGGEKHEIFVDEALRVKSLIPLNRMLNFAAELQLKVKGNA.

Iminosuccinate-binding residues include His47 and Ser68. Cys113 is a binding site for [4Fe-4S] cluster. Iminosuccinate-binding positions include 139–141 (YAN) and Ser156. [4Fe-4S] cluster is bound at residue Cys200. Residues 226–228 (HPE) and Thr243 each bind iminosuccinate. Residue Cys297 coordinates [4Fe-4S] cluster.

The protein belongs to the quinolinate synthase family. Type 1 subfamily. Requires [4Fe-4S] cluster as cofactor.

Its subcellular location is the cytoplasm. The enzyme catalyses iminosuccinate + dihydroxyacetone phosphate = quinolinate + phosphate + 2 H2O + H(+). It functions in the pathway cofactor biosynthesis; NAD(+) biosynthesis; quinolinate from iminoaspartate: step 1/1. Its function is as follows. Catalyzes the condensation of iminoaspartate with dihydroxyacetone phosphate to form quinolinate. In Photobacterium profundum (strain SS9), this protein is Quinolinate synthase.